The following is a 329-amino-acid chain: Biotin synthase (329 aa).

The Radical SAM core domain occupies 48–278 (FLGNGVDLCS…TKKIAVCGGR (231 aa)). 3 residues coordinate [4Fe-4S] cluster: Cys-66, Cys-70, and Cys-73. Ser-143 and Cys-203 together coordinate [2Fe-2S] cluster.

It belongs to the radical SAM superfamily. Biotin synthase family. As to quaternary structure, homodimer. [4Fe-4S] cluster serves as cofactor. Requires [2Fe-2S] cluster as cofactor.

It carries out the reaction (4R,5S)-dethiobiotin + (sulfur carrier)-SH + 2 reduced [2Fe-2S]-[ferredoxin] + 2 S-adenosyl-L-methionine = (sulfur carrier)-H + biotin + 2 5'-deoxyadenosine + 2 L-methionine + 2 oxidized [2Fe-2S]-[ferredoxin]. It participates in cofactor biosynthesis; biotin biosynthesis; biotin from 7,8-diaminononanoate: step 2/2. Functionally, catalyzes the conversion of dethiobiotin (DTB) to biotin by the insertion of a sulfur atom into dethiobiotin via a radical-based mechanism. The protein is Biotin synthase of Geobacter metallireducens (strain ATCC 53774 / DSM 7210 / GS-15).